Here is a 273-residue protein sequence, read N- to C-terminus: HMP-PP phosphatase (273 aa).

Catalysis depends on aspartate 8, which acts as the Nucleophile. Residues aspartate 8, aspartate 10, and aspartate 212 each contribute to the Mg(2+) site.

The protein belongs to the HAD-like hydrolase superfamily. Cof family. Requires Mg(2+) as cofactor.

The enzyme catalyses 4-amino-2-methyl-5-(diphosphooxymethyl)pyrimidine + H2O = 4-amino-2-methyl-5-(phosphooxymethyl)pyrimidine + phosphate + H(+). In terms of biological role, catalyzes the hydrolysis of 4-amino-2-methyl-5-hydroxymethylpyrimidine pyrophosphate (HMP-PP) to 4-amino-2-methyl-5-hydroxymethylpyrimidine phosphate (HMP-P). The sequence is that of HMP-PP phosphatase from Yersinia pseudotuberculosis serotype I (strain IP32953).